A 292-amino-acid chain; its full sequence is Phosphoribosylaminoimidazole-succinocarboxamide synthase (292 aa).

The protein belongs to the SAICAR synthetase family.

The catalysed reaction is 5-amino-1-(5-phospho-D-ribosyl)imidazole-4-carboxylate + L-aspartate + ATP = (2S)-2-[5-amino-1-(5-phospho-beta-D-ribosyl)imidazole-4-carboxamido]succinate + ADP + phosphate + 2 H(+). Its pathway is purine metabolism; IMP biosynthesis via de novo pathway; 5-amino-1-(5-phospho-D-ribosyl)imidazole-4-carboxamide from 5-amino-1-(5-phospho-D-ribosyl)imidazole-4-carboxylate: step 1/2. The chain is Phosphoribosylaminoimidazole-succinocarboxamide synthase from Thermodesulfovibrio yellowstonii (strain ATCC 51303 / DSM 11347 / YP87).